Reading from the N-terminus, the 400-residue chain is Elongation factor Tu (400 aa).

In terms of domain architecture, tr-type G spans 10-210 (KPHINVGTIG…ALDEYIPEPK (201 aa)). The segment at 19 to 26 (GHVDHGKT) is G1. Position 19–26 (19–26 (GHVDHGKT)) interacts with GTP. Mg(2+) is bound at residue Thr-26. The interval 64-68 (GITIA) is G2. Residues 85–88 (DCPG) are G3. GTP-binding positions include 85-89 (DCPGH) and 140-143 (NKAD). Positions 140-143 (NKAD) are G4. Residues 178–180 (SAL) are G5.

The protein belongs to the TRAFAC class translation factor GTPase superfamily. Classic translation factor GTPase family. EF-Tu/EF-1A subfamily. In terms of assembly, monomer.

It is found in the cytoplasm. It catalyses the reaction GTP + H2O = GDP + phosphate + H(+). Functionally, GTP hydrolase that promotes the GTP-dependent binding of aminoacyl-tRNA to the A-site of ribosomes during protein biosynthesis. The chain is Elongation factor Tu from Rubrobacter xylanophilus (strain DSM 9941 / JCM 11954 / NBRC 16129 / PRD-1).